The following is a 468-amino-acid chain: Transmembrane protein 151A (468 aa).

Residues 1 to 20 (MPEGEGGDCGEVPALVPDGE) are disordered. 2 helical membrane passes run 45–65 (CLLL…CRLA) and 98–118 (YLYI…AECW). Positions 384 to 438 (VSSNSLPPARPSGPRLPFSRSRLSLGAGGRTTPGVFRSLSGGPLGRRGEDTEPLE) are disordered.

The protein belongs to the TMEM151 family. As to expression, highly expressed in the central nervous system (CNS) including the cerebral cortex, hippocampus, spinal cord, brainstem, and thalamus. Expression is relatively low during postnatal stages but highly expressed at postnatal day 14 (P14), and declined in adulthood. Also expressed in the stomach, heart, liver, spleen, lung, kidney, and muscle.

It is found in the endoplasmic reticulum membrane. It localises to the cell projection. The protein localises to the axon. The protein resides in the dendrite. This Mus musculus (Mouse) protein is Transmembrane protein 151A (Tmem151a).